The chain runs to 77 residues: U8-lycotoxin-Ls1n (77 aa).

The N-terminal stretch at 1 to 20 (MKLMIFTGLVLFAIVSLIEA) is a signal peptide. Positions 21-26 (QAENEK) are excised as a propeptide.

It belongs to the neurotoxin 19 (CSTX) family. 08 (U8-Lctx) subfamily. In terms of processing, contains 4 disulfide bonds. Expressed by the venom gland.

The protein localises to the secreted. This chain is U8-lycotoxin-Ls1n, found in Lycosa singoriensis (Wolf spider).